The primary structure comprises 513 residues: Zinc finger CCCH-type with G patch domain-containing protein (513 aa).

Met1 carries the post-translational modification N-acetylmethionine. The tract at residues 92–131 is disordered; that stretch reads PVAPGAELETVPSRETGPGPTEPGQEEDDGEDEEGGAALS. Residues 115 to 126 are compositionally biased toward acidic residues; that stretch reads GQEEDDGEDEEG. Residues 176 to 202 form a C3H1-type zinc finger; sequence KSLKPCPFFLEGKCRFQENCRFSHGQV. A disordered region spans residues 267–298; sequence LPPLRTDPAGSSDSDGSDADDPSYARVVEPGA. Phosphoserine occurs at positions 278 and 355. Positions 315-361 constitute a G-patch domain; that stretch reads TRGIGSRLLAKMGYEFGKGLGRRADGRVEPVHAVVLPRGKSLDQCAE. Disordered stretches follow at residues 367 to 394 and 493 to 513; these read TRAG…PPPR and QEAG…MTEF. Over residues 497–513 the composition is skewed to basic and acidic residues; sequence LQREQRKADTHKKMTEF.

In terms of assembly, interacts with CHD4/Mi-2; the interaction is direct.

The protein localises to the nucleus. Functionally, transcription repressor that specifically binds the 5'-GGAG[GA]A[GA]A-3' consensus sequence. Represses transcription by recruiting the chromatin multiprotein complex NuRD to target promoters. Negatively regulates expression of EGFR, a gene involved in cell proliferation, survival and migration. Its ability to repress genes of the EGFR pathway suggest it may act as a tumor suppressor. The sequence is that of Zinc finger CCCH-type with G patch domain-containing protein (ZGPAT) from Ovis aries (Sheep).